Consider the following 262-residue polypeptide: Small ribosomal subunit protein eS4A (262 aa).

In terms of domain architecture, S4 RNA-binding spans 42–105 (LPLIVFLRNR…GEHFRLVYDI (64 aa)).

The protein belongs to the eukaryotic ribosomal protein eS4 family. In terms of assembly, component of the small ribosomal subunit (SSU). Mature yeast ribosomes consist of a small (40S) and a large (60S) subunit. The 40S small subunit contains 1 molecule of ribosomal RNA (18S rRNA) and at least 33 different proteins. The large 60S subunit contains 3 rRNA molecules (25S, 5.8S and 5S rRNA) and at least 46 different proteins.

Its subcellular location is the cytoplasm. Its function is as follows. Component of the ribosome, a large ribonucleoprotein complex responsible for the synthesis of proteins in the cell. The small ribosomal subunit (SSU) binds messenger RNAs (mRNAs) and translates the encoded message by selecting cognate aminoacyl-transfer RNA (tRNA) molecules. The large subunit (LSU) contains the ribosomal catalytic site termed the peptidyl transferase center (PTC), which catalyzes the formation of peptide bonds, thereby polymerizing the amino acids delivered by tRNAs into a polypeptide chain. The nascent polypeptides leave the ribosome through a tunnel in the LSU and interact with protein factors that function in enzymatic processing, targeting, and the membrane insertion of nascent chains at the exit of the ribosomal tunnel. The sequence is that of Small ribosomal subunit protein eS4A (rps401) from Schizosaccharomyces pombe (strain 972 / ATCC 24843) (Fission yeast).